Reading from the N-terminus, the 103-residue chain is Urease subunit beta (103 aa).

The protein belongs to the urease beta subunit family. As to quaternary structure, heterotrimer of UreA (gamma), UreB (beta) and UreC (alpha) subunits. Three heterotrimers associate to form the active enzyme.

It localises to the cytoplasm. The catalysed reaction is urea + 2 H2O + H(+) = hydrogencarbonate + 2 NH4(+). Its pathway is nitrogen metabolism; urea degradation; CO(2) and NH(3) from urea (urease route): step 1/1. Its function is as follows. Ureolysis may allow urea to be employed as a nitrogen source for growth and produces ammonia which may protect from killing at low pH. The sequence is that of Urease subunit beta from Streptococcus salivarius (strain 57.I).